The primary structure comprises 286 residues: 4-diphosphocytidyl-2-C-methyl-D-erythritol kinase (286 aa).

The active site involves Lys-11. Residue 94 to 104 (PMGGGIGGGSS) coordinates ATP. The active site involves Asp-136.

Belongs to the GHMP kinase family. IspE subfamily.

The catalysed reaction is 4-CDP-2-C-methyl-D-erythritol + ATP = 4-CDP-2-C-methyl-D-erythritol 2-phosphate + ADP + H(+). The protein operates within isoprenoid biosynthesis; isopentenyl diphosphate biosynthesis via DXP pathway; isopentenyl diphosphate from 1-deoxy-D-xylulose 5-phosphate: step 3/6. Catalyzes the phosphorylation of the position 2 hydroxy group of 4-diphosphocytidyl-2C-methyl-D-erythritol. This is 4-diphosphocytidyl-2-C-methyl-D-erythritol kinase from Pseudomonas entomophila (strain L48).